The following is a 352-amino-acid chain: Glucose 1-dehydrogenase 1 (352 aa).

Zn(2+) is bound at residue Cys-35. Thr-37 is a binding site for substrate. Residues His-60 and Glu-61 each contribute to the Zn(2+) site. Asn-83 lines the substrate pocket. Cys-87, Cys-90, Cys-93, and Cys-101 together coordinate Zn(2+). Residues Glu-108, Gln-144, and Asp-148 each coordinate substrate. Gln-144 provides a ligand contact to Zn(2+). NADP(+) is bound by residues 182–185 (TGTI), 204–206 (NKR), 264–266 (FGF), 292–294 (LIN), and Lys-341. Residue Asn-294 participates in substrate binding.

This sequence belongs to the zinc-containing alcohol dehydrogenase family. Glucose 1-dehydrogenase subfamily. It depends on Zn(2+) as a cofactor.

The enzyme catalyses D-glucose + NAD(+) = D-glucono-1,5-lactone + NADH + H(+). It catalyses the reaction D-glucose + NADP(+) = D-glucono-1,5-lactone + NADPH + H(+). Functionally, catalyzes the NAD(P)(+)-dependent oxidation of D-glucose to D-gluconate via gluconolactone. Can utilize both NAD(+) and NADP(+) as electron acceptor. Is involved in the degradation of glucose through a non-phosphorylative variant of the Entner-Doudoroff pathway. This chain is Glucose 1-dehydrogenase 1, found in Picrophilus torridus (strain ATCC 700027 / DSM 9790 / JCM 10055 / NBRC 100828 / KAW 2/3).